The primary structure comprises 86 residues: Putative membrane protein insertion efficiency factor (86 aa).

This sequence belongs to the UPF0161 family.

The protein localises to the cell inner membrane. Its function is as follows. Could be involved in insertion of integral membrane proteins into the membrane. The polypeptide is Putative membrane protein insertion efficiency factor (Histophilus somni (strain 129Pt) (Haemophilus somnus)).